A 292-amino-acid chain; its full sequence is Elongation factor Ts (292 aa).

The tract at residues 79–82 (TDFV) is involved in Mg(2+) ion dislocation from EF-Tu.

This sequence belongs to the EF-Ts family.

Its subcellular location is the cytoplasm. Associates with the EF-Tu.GDP complex and induces the exchange of GDP to GTP. It remains bound to the aminoacyl-tRNA.EF-Tu.GTP complex up to the GTP hydrolysis stage on the ribosome. The chain is Elongation factor Ts (tsf) from Idiomarina loihiensis (strain ATCC BAA-735 / DSM 15497 / L2-TR).